Here is a 253-residue protein sequence, read N- to C-terminus: UPF0246 protein lhv_1883 (253 aa).

This sequence belongs to the UPF0246 family.

This chain is UPF0246 protein lhv_1883, found in Lactobacillus helveticus (strain DPC 4571).